The primary structure comprises 404 residues: Putative aspartate aminotransferase, cytoplasmic 2 (404 aa).

The residue at position 249 (lysine 249) is an N6-(pyridoxal phosphate)lysine.

It belongs to the class-I pyridoxal-phosphate-dependent aminotransferase family. In terms of assembly, homodimer. Pyridoxal 5'-phosphate serves as cofactor.

The protein localises to the cytoplasm. The enzyme catalyses L-aspartate + 2-oxoglutarate = oxaloacetate + L-glutamate. The protein is Putative aspartate aminotransferase, cytoplasmic 2 (Got1l1) of Mus musculus (Mouse).